The following is a 448-amino-acid chain: Biotin carboxylase (448 aa).

The region spanning 1 to 445 (MLEKVVIANR…NIHYLEKKLG (445 aa)) is the Biotin carboxylation domain. Residues Lys-116, Lys-159, 165–166 (GG), 201–204 (EKYL), His-209, and His-236 each bind ATP. Positions 120-317 (IKAMKKAGVP…LVKEQLRIAA (198 aa)) constitute an ATP-grasp domain. Lys-238 serves as a coordination point for hydrogencarbonate. ATP-binding residues include Glu-276 and Glu-288. Glu-276, Glu-288, and Asn-290 together coordinate Mg(2+). Mn(2+) is bound by residues Glu-276, Glu-288, and Asn-290. Arg-292, Val-295, and Arg-338 together coordinate hydrogencarbonate. Arg-292 is a catalytic residue. Arg-338 serves as a coordination point for biotin.

In terms of assembly, acetyl-CoA carboxylase is a heterohexamer of biotin carboxyl carrier protein, biotin carboxylase and the two subunits of carboxyl transferase in a 2:2 complex. The cofactor is Mg(2+). Mn(2+) is required as a cofactor.

It catalyses the reaction N(6)-biotinyl-L-lysyl-[protein] + hydrogencarbonate + ATP = N(6)-carboxybiotinyl-L-lysyl-[protein] + ADP + phosphate + H(+). Its pathway is lipid metabolism; malonyl-CoA biosynthesis; malonyl-CoA from acetyl-CoA: step 1/1. Functionally, this protein is a component of the acetyl coenzyme A carboxylase complex; first, biotin carboxylase catalyzes the carboxylation of the carrier protein and then the transcarboxylase transfers the carboxyl group to form malonyl-CoA. The protein is Biotin carboxylase (accC) of Haemophilus influenzae (strain ATCC 51907 / DSM 11121 / KW20 / Rd).